A 400-amino-acid chain; its full sequence is Imidazolonepropionase (400 aa).

Residues histidine 68 and histidine 70 each contribute to the Fe(3+) site. Positions 68 and 70 each coordinate Zn(2+). The 4-imidazolone-5-propanoate site is built by arginine 77, tyrosine 140, and histidine 173. Tyrosine 140 contacts N-formimidoyl-L-glutamate. Histidine 238 serves as a coordination point for Fe(3+). A Zn(2+)-binding site is contributed by histidine 238. Glutamine 241 contacts 4-imidazolone-5-propanoate. Aspartate 313 serves as a coordination point for Fe(3+). Residue aspartate 313 coordinates Zn(2+). Residues asparagine 315 and glycine 317 each contribute to the N-formimidoyl-L-glutamate site. Threonine 318 provides a ligand contact to 4-imidazolone-5-propanoate.

Belongs to the metallo-dependent hydrolases superfamily. HutI family. It depends on Zn(2+) as a cofactor. Requires Fe(3+) as cofactor.

The protein localises to the cytoplasm. It catalyses the reaction 4-imidazolone-5-propanoate + H2O = N-formimidoyl-L-glutamate. It functions in the pathway amino-acid degradation; L-histidine degradation into L-glutamate; N-formimidoyl-L-glutamate from L-histidine: step 3/3. In terms of biological role, catalyzes the hydrolytic cleavage of the carbon-nitrogen bond in imidazolone-5-propanoate to yield N-formimidoyl-L-glutamate. It is the third step in the universal histidine degradation pathway. This chain is Imidazolonepropionase, found in Paracoccus denitrificans (strain Pd 1222).